Here is an 86-residue protein sequence, read N- to C-terminus: Alpha-toxin TbTx5 (86 aa).

Residues 1–19 (MNDFVFLVVACLLTAGTEG) form the signal peptide. An LCN-type CS-alpha/beta domain is found at 21 to 82 (KDGYPVEGDN…EPTKTNGRCK (62 aa)). 4 disulfide bridges follow: Cys31-Cys81, Cys35-Cys57, Cys43-Cys64, and Cys47-Cys66. Proline amide is present on Pro83.

The protein belongs to the long (4 C-C) scorpion toxin superfamily. Sodium channel inhibitor family. Alpha subfamily. As to expression, expressed by the venom gland.

Its subcellular location is the secreted. Functionally, alpha toxins bind voltage-independently at site-3 of sodium channels (Nav) and inhibit the inactivation of the activated channels, thereby blocking neuronal transmission. This Tityus bahiensis (Brazilian scorpion) protein is Alpha-toxin TbTx5.